Reading from the N-terminus, the 530-residue chain is AAA-ATPase At3g28510 (530 aa).

The chain crosses the membrane as a helical span at residues 5-25 (GAIWGITGTTVTSFMFFWAIY). 250–257 (GPPGTGKS) provides a ligand contact to ATP. 2 disordered regions span residues 312–339 (QRKK…KVDD) and 463–530 (KARK…KSDS). Basic and acidic residues-rich tracts occupy residues 326–339 (EEKK…KVDD) and 463–511 (KARK…KEEN). Polar residues predominate over residues 512 to 523 (GNVSQQNGNSID).

It belongs to the AAA ATPase family. BCS1 subfamily. The cofactor is Mg(2+).

It localises to the membrane. It catalyses the reaction ATP + H2O = ADP + phosphate + H(+). This chain is AAA-ATPase At3g28510, found in Arabidopsis thaliana (Mouse-ear cress).